The primary structure comprises 356 residues: tRNA N6-adenosine threonylcarbamoyltransferase (356 aa).

Fe cation contacts are provided by H131 and H135. Residues 154–158 (LVSGG), D187, G200, and N289 contribute to the substrate site. D317 is a binding site for Fe cation.

Belongs to the KAE1 / TsaD family. Fe(2+) serves as cofactor.

The protein resides in the cytoplasm. It carries out the reaction L-threonylcarbamoyladenylate + adenosine(37) in tRNA = N(6)-L-threonylcarbamoyladenosine(37) in tRNA + AMP + H(+). Its function is as follows. Required for the formation of a threonylcarbamoyl group on adenosine at position 37 (t(6)A37) in tRNAs that read codons beginning with adenine. Is involved in the transfer of the threonylcarbamoyl moiety of threonylcarbamoyl-AMP (TC-AMP) to the N6 group of A37, together with TsaE and TsaB. TsaD likely plays a direct catalytic role in this reaction. In Ruthia magnifica subsp. Calyptogena magnifica, this protein is tRNA N6-adenosine threonylcarbamoyltransferase.